The chain runs to 230 residues: Large ribosomal subunit protein uL1 (230 aa).

Belongs to the universal ribosomal protein uL1 family. As to quaternary structure, part of the 50S ribosomal subunit.

In terms of biological role, binds directly to 23S rRNA. The L1 stalk is quite mobile in the ribosome, and is involved in E site tRNA release. Functionally, protein L1 is also a translational repressor protein, it controls the translation of the L11 operon by binding to its mRNA. This chain is Large ribosomal subunit protein uL1, found in Acidithiobacillus ferrooxidans (strain ATCC 53993 / BNL-5-31) (Leptospirillum ferrooxidans (ATCC 53993)).